Here is a 397-residue protein sequence, read N- to C-terminus: Xylose isomerase (397 aa).

Active-site residues include His54 and Asp57. Positions 181, 217, 220, 245, 255, 257, and 293 each coordinate Mg(2+).

The protein belongs to the xylose isomerase family. In terms of assembly, homotetramer. Requires Mg(2+) as cofactor.

Its subcellular location is the cytoplasm. It carries out the reaction alpha-D-xylose = alpha-D-xylulofuranose. The protein is Xylose isomerase of Clavibacter sepedonicus (Clavibacter michiganensis subsp. sepedonicus).